The following is a 174-amino-acid chain: Small ribosomal subunit protein uS5c (174 aa).

Residues 17 to 80 (WEERVVQVKR…TDAKKHLVTV (64 aa)) enclose the S5 DRBM domain.

Belongs to the universal ribosomal protein uS5 family. As to quaternary structure, part of the 30S ribosomal subunit. Contacts protein S4.

Its subcellular location is the plastid. It is found in the chloroplast. In terms of biological role, with S4 and S12 plays an important role in translational accuracy. This is Small ribosomal subunit protein uS5c (rps5) from Porphyra purpurea (Red seaweed).